We begin with the raw amino-acid sequence, 471 residues long: tRNA(Ile)-lysidine synthase (471 aa).

An ATP-binding site is contributed by 35–40 (SGGADS).

It belongs to the tRNA(Ile)-lysidine synthase family.

Its subcellular location is the cytoplasm. It catalyses the reaction cytidine(34) in tRNA(Ile2) + L-lysine + ATP = lysidine(34) in tRNA(Ile2) + AMP + diphosphate + H(+). Functionally, ligates lysine onto the cytidine present at position 34 of the AUA codon-specific tRNA(Ile) that contains the anticodon CAU, in an ATP-dependent manner. Cytidine is converted to lysidine, thus changing the amino acid specificity of the tRNA from methionine to isoleucine. The protein is tRNA(Ile)-lysidine synthase of Geobacter sulfurreducens (strain ATCC 51573 / DSM 12127 / PCA).